We begin with the raw amino-acid sequence, 1060 residues long: Positive regulator of purine utilization (1060 aa).

Polar residues predominate over residues 1–15; that stretch reads MLNPSTSDIHTSPTA. A disordered region spans residues 1–48; sequence MLNPSTSDIHTSPTAVGNGRKRPHPIADSGSAMPSDPSAQQLPHPANE. The segment at residues 67-94 is a DNA-binding region (zn(2)-C6 fungal-type); the sequence is CNRCRQRKNRCDQRLPRCQACEKAGVRC. 5 disordered regions span residues 163-207, 251-282, 367-391, 811-862, and 877-969; these read EIAA…DAED, SVPGNSSERGPSRPKERLPHSATGTEGSTTRD, AEDQKEGRDHSPSATKRQRLSSRQY, VQTS…RFDM, and RQGS…PSGM. Composition is skewed to basic and acidic residues over residues 170-182, 189-207, and 260-269; these read SNDKSVRIKKEKN, KASRYDHDPEVKQDSDAED, and GPSRPKERLP. Residues 272 to 282 show a composition bias toward polar residues; that stretch reads ATGTEGSTTRD. A compositionally biased stretch (basic and acidic residues) spans 367–377; that stretch reads AEDQKEGRDHS. The segment covering 811–831 has biased composition (polar residues); the sequence is VQTSTSGSRQFNATQSRSRPY. 2 stretches are compositionally biased toward low complexity: residues 832-859 and 930-952; these read SRQQAEQRQRQSASRRQLQMRQSRPLPR and PRYYYNNSPQQSGSPGSVVAASG.

The protein resides in the nucleus. Mediates the induction of a number of unlinked genes involved in purine utilization. Binds to the consensus sequence 5'-TCGGNNNNNNCCGA-3'. The sequence is that of Positive regulator of purine utilization (uaY) from Emericella nidulans (strain FGSC A4 / ATCC 38163 / CBS 112.46 / NRRL 194 / M139) (Aspergillus nidulans).